Here is a 160-residue protein sequence, read N- to C-terminus: 3-dehydroquinate dehydratase (160 aa).

Tyr28 functions as the Proton acceptor in the catalytic mechanism. Asn79, His85, and Asp92 together coordinate substrate. His105 (proton donor) is an active-site residue. Substrate contacts are provided by residues 106–107 (MS) and Arg116.

The protein belongs to the type-II 3-dehydroquinase family. In terms of assembly, homododecamer.

It carries out the reaction 3-dehydroquinate = 3-dehydroshikimate + H2O. It participates in metabolic intermediate biosynthesis; chorismate biosynthesis; chorismate from D-erythrose 4-phosphate and phosphoenolpyruvate: step 3/7. Its function is as follows. Catalyzes a trans-dehydration via an enolate intermediate. The protein is 3-dehydroquinate dehydratase of Gloeobacter violaceus (strain ATCC 29082 / PCC 7421).